The following is a 310-amino-acid chain: MPAFETVVIAYRAEEAHSRIAADRCESLLHKVGCRVLKGPTGPQDNPYPHFLEATGGHIDLAIVLGGDGSILAAARYLAAVDVPILAVNVGGHLGFLTQPPEVLGGRYWERLLAGEWELEKRMMLQASLTGPPPLPERQPYFCLNEFCLKPASEMRLTSIILELAIDGEIIDQIHGDGLLVSTPTGSTSYTVAANGPIIAPSLQAITITPICPLSLSSRPVVLPATGTIEVSPLRDPDLNIKLWSDGAFAAPVHPCQTVRIEVARHPTRLLILEEDHSYFRTLREKLKWAGTRIQAERDPECLLPPQNHP.

Aspartate 68 serves as the catalytic Proton acceptor. Residues 68–69, 145–146, arginine 156, histidine 175, and aspartate 177 contribute to the NAD(+) site; these read DG and NE.

The protein belongs to the NAD kinase family. It depends on a divalent metal cation as a cofactor.

It localises to the cytoplasm. The catalysed reaction is NAD(+) + ATP = ADP + NADP(+) + H(+). Functionally, involved in the regulation of the intracellular balance of NAD and NADP, and is a key enzyme in the biosynthesis of NADP. Catalyzes specifically the phosphorylation on 2'-hydroxyl of the adenosine moiety of NAD to yield NADP. This is NAD kinase 1 from Gloeobacter violaceus (strain ATCC 29082 / PCC 7421).